The primary structure comprises 301 residues: Leucine-rich repeat-containing protein 30 (301 aa).

LRR repeat units lie at residues 72–93 (EVQKLNLSHNQLRVLPPEVGKL), 95–116 (RIVVLNLCGNRLKSLPREVSLL), 118–139 (CLKVLFVNMNCLTEVPAELSLC), 141–163 (KLEVLSLSHNCLSQLPACFADLS), 164–185 (RLRKLNLSNNFFAHIPMCVFSL), 187–208 (ELIFLHVGSNRLENIAESIQHL), 210–231 (SLQIFIAEGNNIHSFPRSLCLV), 233–254 (SLELLNLNNNDIQTLPSELHLL), and 265–287 (MDKGLHISHNPLSKPLPELVEGG).

This chain is Leucine-rich repeat-containing protein 30 (LRRC30), found in Homo sapiens (Human).